Reading from the N-terminus, the 978-residue chain is Regulator of MON1-CCZ1 complex homolog (978 aa).

Composition is skewed to low complexity over residues 311 to 351 (TSTP…MISS) and 479 to 495 (NNNN…NNNN). 4 disordered regions span residues 311–363 (TSTP…HKEQ), 474–546 (SINQ…NSKT), 558–665 (KQQQ…NNHV), and 703–727 (EKEK…NNNI). The segment covering 496–515 (TAQTLNSTGNLSNSISIGGM) has biased composition (polar residues). Positions 516–539 (NTSTDNLTTTTTTSSSISSSPSNS) are enriched in low complexity. The span at 582 to 591 (GDGGSGGSGG) shows a compositional bias: gly residues. Low complexity-rich tracts occupy residues 592-663 (SFYN…NNNN) and 710-727 (NNNN…NNNI). A Mic1 domain is found at 735–908 (KLELDSKYLI…HPSFDKYIKL (174 aa)). The segment at 955–978 (NNSSPTLRSSNSLNSSPRLQYSNN) is disordered.

The protein belongs to the RMC1 family.

The protein resides in the lysosome membrane. The protein localises to the late endosome membrane. Its function is as follows. May have a role in autophagy. This is Regulator of MON1-CCZ1 complex homolog from Dictyostelium discoideum (Social amoeba).